Reading from the N-terminus, the 133-residue chain is Fatty acid-binding protein, heart (133 aa).

Ala2 is subject to N-acetylalanine. Thr8 bears the Phosphothreonine mark. Tyr20 carries the post-translational modification Phosphotyrosine; by Tyr-kinases. Ser23 is modified (phosphoserine). Thr30 carries the phosphothreonine modification. Ser83 carries the post-translational modification Phosphoserine. 127–129 provides a ligand contact to (9Z)-octadecenoate; sequence RTY. 127-129 is a binding site for hexadecanoate; sequence RTY. Residue 127 to 129 participates in octadecanoate binding; it reads RTY.

As to expression, heart, but also skeletal muscle, kidney, brain and mammary gland.

The protein resides in the cytoplasm. In terms of biological role, FABPs are thought to play a role in the intracellular transport of long-chain fatty acids and their acyl-CoA esters. In Rattus norvegicus (Rat), this protein is Fatty acid-binding protein, heart (Fabp3).